The chain runs to 1030 residues: Isoleucine--tRNA ligase 2 (1030 aa).

The 'HIGH' region motif lies at 48-58; sequence PFATGLPHYGH. Positions 589–593 match the 'KMSKS' region motif; it reads KMSKR. ATP is bound at residue Lys-592.

Belongs to the class-I aminoacyl-tRNA synthetase family. IleS type 2 subfamily. In terms of assembly, monomer. It depends on Zn(2+) as a cofactor.

It is found in the cytoplasm. It catalyses the reaction tRNA(Ile) + L-isoleucine + ATP = L-isoleucyl-tRNA(Ile) + AMP + diphosphate. In terms of biological role, catalyzes the attachment of isoleucine to tRNA(Ile). As IleRS can inadvertently accommodate and process structurally similar amino acids such as valine, to avoid such errors it has two additional distinct tRNA(Ile)-dependent editing activities. One activity is designated as 'pretransfer' editing and involves the hydrolysis of activated Val-AMP. The other activity is designated 'posttransfer' editing and involves deacylation of mischarged Val-tRNA(Ile). Functionally, confers high-level resistance to the antibiotic mupirocin (pseudomonic acid A), an Ile-analog produced by P.fluorescens NCIMB 10586 itself that competitively inhibits activation by Ile-tRNA synthetase, thus inhibiting protein biosynthesis. In Pseudomonas fluorescens, this protein is Isoleucine--tRNA ligase 2 (ileS2).